Reading from the N-terminus, the 382-residue chain is Glutamyl-tRNA reductase (382 aa).

Substrate-binding positions include 38-41 (TCNR), Ser85, 90-92 (ENQ), and Gln96. Cys39 serves as the catalytic Nucleophile. Residue 164–169 (GAGEMG) coordinates NADP(+).

It belongs to the glutamyl-tRNA reductase family. Homodimer.

The catalysed reaction is (S)-4-amino-5-oxopentanoate + tRNA(Glu) + NADP(+) = L-glutamyl-tRNA(Glu) + NADPH + H(+). It functions in the pathway porphyrin-containing compound metabolism; protoporphyrin-IX biosynthesis; 5-aminolevulinate from L-glutamyl-tRNA(Glu): step 1/2. Catalyzes the NADPH-dependent reduction of glutamyl-tRNA(Glu) to glutamate 1-semialdehyde (GSA). The protein is Glutamyl-tRNA reductase of Methanococcus maripaludis (strain C6 / ATCC BAA-1332).